The sequence spans 395 residues: Phosphoprotein (395 aa).

The tract at residues 178–217 is disordered; sequence NGVLHGSEIRSKSSSGVIPGVPQSRPQLASSPAHADPAPA. A compositionally biased stretch (low complexity) spans 206-217; the sequence is ASSPAHADPAPA. Positions 220–283 are multimerization; that stretch reads ENVKEIIELL…ITTIKIMDPS (64 aa).

This sequence belongs to the rubulavirus/avulavirus P protein family. In terms of assembly, homotetramer. Interacts (via multimerization domain) with polymerase L; this interaction forms the polymerase L-P complex. Interacts (via N-terminus) with N0 (via Ncore); this interaction allows P to chaperon N0 to avoid N polymerization before encapsidation. Interacts (via C-terminus) with N-RNA template; this interaction positions the polymerase on the template for both transcription and replication. Interacts with host ARHGAP26; this interaction promotes host RHOA activation. Interacts with host KPNA1 and KPNA6.

The protein localises to the host cytoplasm. Functionally, essential cofactor of the RNA polymerase L that plays a central role in the transcription and replication by forming the polymerase complex with RNA polymerase L and recruiting L to the genomic N-RNA template for RNA synthesis. Also plays a central role in the encapsidation of nascent RNA chains by forming the encapsidation complex with the nucleocapsid protein N (N-P complex). Acts as a chaperone for newly synthesized free N protein, so-called N0, allowing encapsidation of nascent RNA chains during replication. The nucleoprotein protein N prevents excessive phosphorylation of P, which leads to down-regulation of viral transcription/ replication. Participates, together with N, in the formation of viral factories (viroplasms), which are large inclusions in the host cytoplasm where replication takes place. Also plays a role in viral growth by promoting host RHOA activation and thus actin formation via ARHGAP26 inhibition. The protein is Phosphoprotein (P/V) of Homo sapiens (Human).